The sequence spans 187 residues: tRNA (mnm(5)s(2)U34)-methyltransferase (187 aa).

S-adenosyl-L-methionine is bound by residues asparagine 31, asparagine 33, aspartate 51, glutamine 53, histidine 77, and glutamate 78.

The protein belongs to the methyltransferase superfamily. MnmM family. Homodimer.

It catalyses the reaction 5-aminomethyl-2-thiouridine(34) in tRNA + S-adenosyl-L-methionine = 5-methylaminomethyl-2-thiouridine(34) in tRNA + S-adenosyl-L-homocysteine + H(+). The protein operates within tRNA modification. Functionally, involved in the biosynthesis of 5-methylaminomethyl-2-thiouridine (mnm(5)s(2)U) at the wobble position (U34) in tRNA. Catalyzes the transfer of a methyl group from S-adenosyl-L-methionine to nm(5)s(2)U34 to form mnm(5)s(2)U34. The protein is tRNA (mnm(5)s(2)U34)-methyltransferase of Staphylococcus aureus (strain NCTC 8325 / PS 47).